The primary structure comprises 506 residues: Maturase K (506 aa).

This sequence belongs to the intron maturase 2 family. MatK subfamily.

The protein localises to the plastid. The protein resides in the chloroplast. Its function is as follows. Usually encoded in the trnK tRNA gene intron. Probably assists in splicing its own and other chloroplast group II introns. This is Maturase K from Phyllodoce caerulea (Blue mountain heath).